The following is a 213-amino-acid chain: Uridine kinase (213 aa).

Glycine 14–serine 21 lines the ATP pocket.

It belongs to the uridine kinase family.

Its subcellular location is the cytoplasm. It catalyses the reaction uridine + ATP = UMP + ADP + H(+). The catalysed reaction is cytidine + ATP = CMP + ADP + H(+). It participates in pyrimidine metabolism; CTP biosynthesis via salvage pathway; CTP from cytidine: step 1/3. Its pathway is pyrimidine metabolism; UMP biosynthesis via salvage pathway; UMP from uridine: step 1/1. This chain is Uridine kinase, found in Vibrio campbellii (strain ATCC BAA-1116).